A 321-amino-acid chain; its full sequence is Serpentine receptor class delta-63 (321 aa).

Transmembrane regions (helical) follow at residues 14–34 (LVYM…YNFT), 41–61 (VKYF…MAFA), 83–103 (YIGP…GIVV), 128–148 (LWTL…IVII), 190–208 (AAMS…GTYW), 240–260 (NFQI…YFMI), and 273–293 (TITV…IYFI).

The protein belongs to the nematode receptor-like protein srd family.

The protein localises to the membrane. This Caenorhabditis elegans protein is Serpentine receptor class delta-63 (srd-63).